The chain runs to 343 residues: Protease inhibitor Egf1.5a (343 aa).

A signal peptide spans 1–28 (MYIDTGIMSNNIFLFAFFALVGLTRIEA). The 53-residue stretch at 52–104 (CRENEHYNSTRIECEDECNDRNNKLCYRFQQFCWCNEGYIRNSSHICVKLEDC) folds into the TIL domain.

The protein belongs to the polydnaviridae EGF-like motif protein family. Interacts with host PAP1, PAP3 and SPH2.

Its function is as follows. Counteracts the host humoral immune response by inhibiting the processing and the amidolytic activity of host PAP1 and PAP3. Thereby, melanization of host hemolymph, normally producing several reactive intermediates toxic for viruses, is deregulated and proper immune response cannot occur. This is Protease inhibitor Egf1.5a (O1) from Microplitis demolitor bracovirus (isolate Webb) (MdBV).